A 181-amino-acid polypeptide reads, in one-letter code: Large ribosomal subunit protein uL5c (181 aa).

It belongs to the universal ribosomal protein uL5 family. Part of the 50S ribosomal subunit; contacts the 5S rRNA.

It is found in the plastid. It localises to the chloroplast. Functionally, binds 5S rRNA, forms part of the central protuberance of the 50S subunit. This is Large ribosomal subunit protein uL5c (rpl5) from Porphyra purpurea (Red seaweed).